The primary structure comprises 136 residues: Pleckstrin homology-like domain family A member 2 (136 aa).

In terms of domain architecture, PH spans 9 to 103; it reads ILKEGELEKR…WNAVIAIALV (95 aa).

It belongs to the PHLDA2 family.

The protein resides in the cytoplasm. The protein localises to the membrane. Its function is as follows. Plays a role in regulating placenta growth. May act via its PH domain that competes with other PH domain-containing proteins, thereby preventing their binding to membrane lipids. This Danio rerio (Zebrafish) protein is Pleckstrin homology-like domain family A member 2 (phlda2).